An 831-amino-acid chain; its full sequence is Sodium/hydrogen exchanger 3 (831 aa).

The signal sequence occupies residues 1 to 28 (MWHPALGPGWKPLLALALALTSLRGVRG). Topologically, residues 29-48 (IEEEPNSGGSFQIVTFKWHH) are extracellular. A helical membrane pass occupies residues 49–71 (VQDPYIIALWILVASLAKIVFHL). The Cytoplasmic portion of the chain corresponds to 72–79 (SHKVTSVV). A helical membrane pass occupies residues 80–99 (PESALLIVLGLVLGGIVWAA). The Extracellular segment spans residues 100–108 (DHIASFTLT). A helical membrane pass occupies residues 109–126 (PTLFFFYLLPPIVLDAGY). Topologically, residues 127–129 (FMP) are cytoplasmic. A helical transmembrane segment spans residues 130–165 (NRLFFGNLGTILLYAVIGTIWNAATTGLSLYGVFLS). Glycine 135, glycine 138, and threonine 139 together coordinate a 1,2-diacyl-sn-glycero-3-phospho-(1D-myo-inositol). Topologically, residues 166–178 (GLMGELKIGLLDF) are extracellular. The helical transmembrane segment at 179–200 (LLFGSLIAAVDPVAVLAVFEEV) threads the bilayer. The Cytoplasmic portion of the chain corresponds to 201 to 202 (HV). Residues 203–234 (NEVLFIIVFGESLLNDAVTVVLYNVFESFVTL) traverse the membrane as a helical segment. Over 235-241 (GGDAVTG) the chain is Extracellular. The chain crosses the membrane as a helical span at residues 242–276 (VDCVKGIVSFFVVSLGGTLVGVIFAFLLSLVTRFT). At 277–278 (KH) the chain is on the cytoplasmic side. Residues 279 to 301 (VRIIEPGFVFVISYLSYLTSEML) form a helical membrane-spanning segment. The Extracellular segment spans residues 302–303 (SL). A helical transmembrane segment spans residues 304-320 (SAILAITFCGICCQKYV). Over 321–327 (KANISEQ) the chain is Cytoplasmic. The helical transmembrane segment at 328–356 (SATTVRYTMKMLASGAETIIFMFLGISAV) threads the bilayer. The Extracellular segment spans residues 357 to 364 (DPVIWTWN). Residues 365–386 (TAFVLLTLVFISVYRAIGVVLQ) form a helical membrane-spanning segment. The Cytoplasmic portion of the chain corresponds to 387–399 (TWILNRYRMVQLE). A 1,2-diacyl-sn-glycero-3-phospho-(1D-myo-inositol) is bound at residue methionine 395. Residues 400–423 (TIDQVVMSYGGLRGAVAYALVVLL) form a helical membrane-spanning segment. The Extracellular segment spans residues 424–430 (DEKKVKE). Residues 431–464 (KNLFVSTTLIVVFFTVIFQGLTIKPLVQWLKVKR) form a helical membrane-spanning segment. Residues 465 to 831 (SEQREPKLNE…QPASPESTHM (367 aa)) are Cytoplasmic-facing. A 1,2-diacyl-sn-glycero-3-phospho-(1D-myo-inositol) contacts are provided by glutamine 494, isoleucine 495, and histidine 497. A phosphoserine mark is found at serine 552 and serine 560. The interval 573 to 587 (RPSTVEASVSYFLRE) is interaction with EZR. The tract at residues 588-665 (NVSAVCLDMQ…RKRLESFKSA (78 aa)) is interaction with NHERF4. The tract at residues 589–693 (VSAVCLDMQS…AQKRRNSSIP (105 aa)) is interaction with AHCYL1. 2 positions are modified to phosphoserine: serine 590 and serine 605. Serine 661 carries the phosphoserine; by SGK1 modification. Phosphoserine occurs at positions 716, 807, and 810. Positions 808 to 831 (VDSFLQADGPEEQLQPASPESTHM) are disordered. Positions 822–831 (QPASPESTHM) are enriched in polar residues.

It belongs to the monovalent cation:p,roton antiporter 1 (CPA1) transporter (TC 2.A.36) family. As to quaternary structure, homodimer. Found in the forms of complex and dynamic macromolecular complexes. Binds NHERF1 and NHERF2. Interacts with NHERF4 and interactions decrease in response to elevated calcium ion levels. Interacts with PDZK1 (via C-terminal PDZ domain). Interacts with CHP1; this interaction increases trafficking and activity at the plasma membrane of SLC9A3. Interacts with CHP2 and SHANK2. Interacts with AHCYL1; the interaction is required for SLC9A3 activity. Interacts with EZR; interaction targets SLC9A3 to the apical membrane. Interacts with SNX27 (via PDZ domains); directs SLC9A3 membrane insertion from early endosomes to the plasma membrane. Phosphorylated by PRKACA at Ser-552 and Ser-605, which inhibits activity. Phosphorylation of Ser-605 is essential for cAMP-mediated inhibition of SLC9A3. Phosphorylation at Ser-661 by SGK1 is associated with increased abundance at the cell membrane. Phosphorylation at Ser-716 by CSNK2A1 regulates SLC9A3 activity through the formation of multiple signaling complexes. Most abundant in colon and small intestine, followed by kidney and stomach. In kidney, expressed in proximal tubules and outer medulla (at protein level).

Its subcellular location is the apical cell membrane. The protein localises to the cell membrane. It localises to the recycling endosome membrane. The protein resides in the early endosome membrane. The enzyme catalyses Na(+)(in) + H(+)(out) = Na(+)(out) + H(+)(in). Its activity is regulated as follows. Seems to switch between active and inactive modes in response to various stimuli. Activated directly or indirectly by membrane phosphatidylinositol (PIs). Regulated by a variety of auxiliary proteins, which facilitate the maturation, cell surface expression and function of the transporter. Inhibited specifically by the drug tenapanor. In terms of biological role, plasma membrane Na(+)/H(+) antiporter. Exchanges intracellular H(+) ions for extracellular Na(+) in 1:1 stoichiometry, playing a key role in salt and fluid absorption and pH homeostasis. Major apical Na(+)/H(+) exchanger in kidney and intestine playing an important role in renal and intestine Na(+) absorption and blood pressure regulation. The sequence is that of Sodium/hydrogen exchanger 3 (Slc9a3) from Rattus norvegicus (Rat).